The following is a 277-amino-acid chain: Small ribosomal subunit protein uS3 (277 aa).

Positions 43 to 111 (IRKVMNKDLE…QVQLNIFEVK (69 aa)) constitute a KH type-2 domain. Residues 216–277 (FEEQQAQQGN…EAAVEPETKE (62 aa)) form a disordered region. Over residues 264-277 (EVSKEAAVEPETKE) the composition is skewed to basic and acidic residues.

This sequence belongs to the universal ribosomal protein uS3 family. In terms of assembly, part of the 30S ribosomal subunit. Forms a tight complex with proteins S10 and S14.

Binds the lower part of the 30S subunit head. Binds mRNA in the 70S ribosome, positioning it for translation. The sequence is that of Small ribosomal subunit protein uS3 from Bifidobacterium animalis subsp. lactis (strain AD011).